Consider the following 407-residue polypeptide: Gonadotropin-releasing hormone receptor (407 aa).

Residues 1 to 36 are Extracellular-facing; sequence MDYLNDSMFNNMTYNITSTPLPDAPRFDNVYVSKLC. Residues Asn5, Asn11, and Asn15 are each glycosylated (N-linked (GlcNAc...) asparagine). A helical transmembrane segment spans residues 37-57; sequence VLGTVFVISFFGNTLVIIQIF. Residues 58-69 lie on the Cytoplasmic side of the membrane; the sequence is RIRGSRSTIQSL. Residues 70-90 form a helical membrane-spanning segment; it reads ILNLAIADLMVSFFNILMDII. Residues 91 to 105 are Extracellular-facing; sequence WSATVEWLAGNTMCK. Residues Cys104 and Cys183 are joined by a disulfide bond. A helical membrane pass occupies residues 106 to 126; that stretch reads IMKYLTVFGLHLSTYITVSIA. At 127–147 the chain is on the cytoplasmic side; it reads LDRCFAILSPMSRSKAPLRVR. A helical transmembrane segment spans residues 148–168; the sequence is IMITMAWVLSAIFSIPQAVIF. The Extracellular portion of the chain corresponds to 169–199; the sequence is QEQRKMFRQGMFHQCRDSYNALWQKQLYSAS. A helical transmembrane segment spans residues 200-220; that stretch reads SLILLFVIPLIIMVTSYLLIL. Over 221-268 the chain is Cytoplasmic; it reads KTIVKTSRQFHDTPISPTSMSCYSVNHGQIRTHLFERARKRSSRMSAV. The helical transmembrane segment at 269–289 threads the bilayer; the sequence is IVAAFILCWTPYYIIFLGFAF. The Extracellular segment spans residues 290–298; it reads FQWDNSRTV. A helical transmembrane segment spans residues 299 to 319; sequence IYFFTLGTSNCMLNPLIYGAF. Residues 320-407 are Cytoplasmic-facing; the sequence is TIYKVHRGRS…NGKMPTKPPG (88 aa). Residues 377–407 are disordered; that stretch reads SLTNPHQPVRPSPGINSTTSPNGKMPTKPPG.

The protein belongs to the G-protein coupled receptor 1 family. In terms of tissue distribution, widely expressed in peripheral nervous tissue, gonadal tissue and brain. In the brain, expression is high in the palliovisceral lobe and superior buccal lobe but low in the subvertical lobe, superior and inferior frontal lobe, posterior brachial lobe and pedal lobe. Expressed in stomach, rectum, aorta, heart, salivary gland, branchia, pancreas, radula retractor muscle, branchial vessel but not in white body, esophagus, liver and kidney.

The protein resides in the cell membrane. In terms of biological role, receptor for gonadotropin releasing hormone (GnRH) that mediates the action of GnRH to stimulate the secretion of the gonadotropic hormones luteinizing hormone (LH) and follicle-stimulating hormone (FSH). This receptor mediates its action by association with G-proteins that activate a phosphatidylinositol-calcium second messenger system. Ligand interaction triggers steroidogenesis in spermatozoa and follicles. Appears to be involved in contraction of the radula retractor muscle. The chain is Gonadotropin-releasing hormone receptor from Octopus vulgaris (Common octopus).